A 255-amino-acid chain; its full sequence is MNPPPLIRLQDVTVKIQGRTLIENVTFDINSGEIITVIGPNGAGKSTLAKALLGIQPLSRGEVLRRPGLKIGYMPQRFHIDASLPLTVKRFLQLAHNPQRWREALQRVEMEHVAKQPMHTLSGGELQRVLLARALQRAPDLLVLDEPAQGVDVTGQAELYRLIRSLRDELHCGALLVSHDLHLVMASTDQVLCLNRHICCAGHPEKVSNEPAFINLFGTQAARSLAVYHHHHDHHHHTDGTVAAGSECSHGDQHA.

An ABC transporter domain is found at 7-220; the sequence is IRLQDVTVKI…PAFINLFGTQ (214 aa). 39–46 is an ATP binding site; sequence GPNGAGKS. A disordered region spans residues 229–255; sequence HHHHDHHHHTDGTVAAGSECSHGDQHA.

Belongs to the ABC transporter superfamily. Zinc importer (TC 3.A.1.15.5) family. In terms of assembly, the complex is composed of two ATP-binding proteins (ZnuC), two transmembrane proteins (ZnuB) and a solute-binding protein (ZnuA).

The protein localises to the cell inner membrane. The enzyme catalyses Zn(2+)(out) + ATP(in) + H2O(in) = Zn(2+)(in) + ADP(in) + phosphate(in) + H(+)(in). In terms of biological role, part of the ABC transporter complex ZnuABC involved in zinc import. Responsible for energy coupling to the transport system. This is Zinc import ATP-binding protein ZnuC 1 from Hahella chejuensis (strain KCTC 2396).